Consider the following 255-residue polypeptide: uncharacterized protein (255 aa).

2 consecutive transmembrane segments (helical) span residues 99–119 (ISLI…ITSF) and 146–166 (YIGS…ILFL).

The protein resides in the mitochondrion membrane. This is an uncharacterized protein from Schizosaccharomyces pombe (strain 972 / ATCC 24843) (Fission yeast).